The chain runs to 357 residues: Peptide chain release factor 1 (357 aa).

Glutamine 233 carries the post-translational modification N5-methylglutamine.

It belongs to the prokaryotic/mitochondrial release factor family. Post-translationally, methylated by PrmC. Methylation increases the termination efficiency of RF1.

The protein localises to the cytoplasm. Its function is as follows. Peptide chain release factor 1 directs the termination of translation in response to the peptide chain termination codons UAG and UAA. This Enterococcus faecalis (strain ATCC 700802 / V583) protein is Peptide chain release factor 1.